Consider the following 3515-residue polypeptide: Microtubule-actin cross-linking factor 1, isoforms 6/7 (3515 aa).

7 disordered regions span residues 1-23, 108-136, 155-196, 965-1178, 1217-1298, 1710-1730, and 3078-3108; these read MGKPLSRPDCLRRNPSCLGKGEE, VQKSAPVPPRRRPNAERKDNVNRRSWKSF, VSEA…TLEH, TEED…AVPT, SPAA…SPAA, EELATSGGQSPTGEQIPQFQQ, and PTHAPFIEKSRSGGRKSLSQPTPPPMPILSQ. Residues 120 to 129 show a composition bias toward basic and acidic residues; the sequence is PNAERKDNVN. Positions 157–245 are 13 X 13 AA approximate tandem repeat of P-T-S-P-A-A-A-V-P-T-P-E-E; that stretch reads EAGASNPSLQ…ESEAVATSGN (89 aa). 2 stretches are compositionally biased toward low complexity: residues 995–1031 and 1040–1139; these read STPEEPASPAAAVPTPEEPTSPAAAVPTPEEPTSPAA and TSPA…AVPT. Tandem repeats lie at residues 1012–1024, 1026–1037, 1038–1051, 1052–1064, 1065–1077, 1078–1090, 1091–1103, 1104–1116, 1117–1129, 1130–1142, 1143–1155, 1156–1168, and 1169–1178. Over residues 1140–1151 the composition is skewed to pro residues; the sequence is PEEPAFPAPAVP. Composition is skewed to low complexity over residues 1162 to 1178 and 1268 to 1298; these read AVPTPEESASPAAAVPT and SSPAASVPTPEEPASPAAAVSNLEEPASPAA. Polar residues predominate over residues 1715–1730; sequence SGGQSPTGEQIPQFQQ. 2 EF-hand domains span residues 3168–3203 and 3204–3239; these read HKKSRVMDFFRRIDKDQDGKITRQEFIDGILASKFP and TTKLEMTAVADIFDRDGDGYIDYYEFVAALHPNKDA. Positions 3181, 3183, 3185, 3187, 3192, 3217, 3219, 3221, 3223, and 3228 each coordinate Ca(2+). Residues 3244–3316 form the GAR domain; that stretch reads TDADKIEDEV…EFLVKNDPCR (73 aa). Positions 3332-3515 are disordered; the sequence is PEGASQGMTP…ASPRTPGPKR (184 aa). Residues 3352–3386 show a composition bias toward low complexity; it reads SSRAASPTRSSSSASQSNHSCTSMPSSPATPASGT. The span at 3402 to 3426 shows a compositional bias: polar residues; sequence TFHSSRTSLAGDTSNSSSPASTGAK. The span at 3437-3451 shows a compositional bias: low complexity; the sequence is SRPGSRAGSRAGSRA. Positions 3466-3488 are enriched in polar residues; sequence ETQSACSDTSESSAAGGQGNSRR.

The protein resides in the cytoplasm. It is found in the cytoskeleton. The protein is Microtubule-actin cross-linking factor 1, isoforms 6/7 of Homo sapiens (Human).